Reading from the N-terminus, the 618-residue chain is Chaperone protein HtpG (618 aa).

Positions 1 to 331 (MAKHTFQTEV…SEDLPLNVSR (331 aa)) are a; substrate-binding. Residues 332–541 (EILQQNRILA…EDDPNFAMIK (210 aa)) form a b region. A c region spans residues 542-618 (MMRQMGNALG…RLNAMLERAI (77 aa)).

It belongs to the heat shock protein 90 family. Homodimer.

The protein localises to the cytoplasm. Its function is as follows. Molecular chaperone. Has ATPase activity. This Wolinella succinogenes (strain ATCC 29543 / DSM 1740 / CCUG 13145 / JCM 31913 / LMG 7466 / NCTC 11488 / FDC 602W) (Vibrio succinogenes) protein is Chaperone protein HtpG.